Consider the following 760-residue polypeptide: uncharacterized protein (760 aa).

A signal peptide spans 1–23 (MVIKKGFFALSSCTLGLGLILTA). C24 carries N-palmitoyl cysteine lipidation. The S-diacylglycerol cysteine moiety is linked to residue C24. Disordered stretches follow at residues 220-262 (ANGK…NSDN) and 443-482 (YEIKAPTNSQNGNGTLLGSFTKSKSNGKEQSGQDEDNQTS). Composition is skewed to polar residues over residues 222–257 (GKTTSTQTSPQPKNAVSSLQLKQAAEGTSTDNSQDA) and 448–472 (PTNSQNGNGTLLGSFTKSKSNGKEQ).

This sequence belongs to the MG185/MG260 family.

The protein localises to the cell membrane. This is an uncharacterized protein from Mycoplasma pneumoniae (strain ATCC 29342 / M129 / Subtype 1) (Mycoplasmoides pneumoniae).